Reading from the N-terminus, the 701-residue chain is Centrosomal protein of 83 kDa (701 aa).

Residues 1 to 14 (MVVSTFTDMDTFPN) show a composition bias toward polar residues. A disordered region spans residues 1-23 (MVVSTFTDMDTFPNNFPPGGDSG). 2 coiled-coil regions span residues 40-634 (LRCE…SLIL) and 665-698 (HMQE…ELGS). A Phosphoserine modification is found at S698.

The protein belongs to the CEP83 family. Interacts with CEP164 and IFT20.

It localises to the cytoplasm. The protein localises to the cytoskeleton. Its subcellular location is the microtubule organizing center. The protein resides in the centrosome. It is found in the centriole. In terms of biological role, component of the distal appendage region of the centriole involved in the initiation of primary cilium assembly. May collaborate with IFT20 in the trafficking of ciliary membrane proteins from the Golgi complex to the cilium during the initiation of primary cilium assembly. The sequence is that of Centrosomal protein of 83 kDa (CEP83) from Homo sapiens (Human).